We begin with the raw amino-acid sequence, 345 residues long: Transcription factor STKL1 (345 aa).

The segment at 1–145 (MASLENPAID…KKGHAQRVWS (145 aa)) is disordered. Over residues 11–22 (SSSEFESSSEEI) the composition is skewed to low complexity. A compositionally biased stretch (basic and acidic residues) spans 23–32 (SSSKESKPKE). Residues 37–46 (VPSTKTLNSP) are compositionally biased toward polar residues. The residue at position 105 (S105) is a Phosphoserine. Residues 114–137 (RASEGTTSRDMHVKRIKKEGDNKK) show a composition bias toward basic and acidic residues.

This sequence belongs to the GeBP family. In terms of tissue distribution, expressed strongly in leaves and flowers, weakly in roots, and very weakly in stems.

It is found in the nucleus. Functionally, transcription repressor that binds DNA in a sequence-specific manner, 5'-GCCT-3', to regulate the expression of PGR. Acts as a modulatory component for the glucose-triggered developmental leaf growth process. The chain is Transcription factor STKL1 from Arabidopsis thaliana (Mouse-ear cress).